Reading from the N-terminus, the 545-residue chain is T-complex protein 1 subunit gamma (545 aa).

M1 carries the N-acetylmethionine modification. Residues 1-24 (MMGHRPVLVLSQNTKRESGRKVQS) are disordered. S11 is modified (phosphoserine). Residue K15 forms a Glycyl lysine isopeptide (Lys-Gly) (interchain with G-Cter in SUMO2) linkage. Residues G42, G94, T95, T96, S97, T162, and K163 each coordinate ADP. ATP is bound by residues G42, G94, T95, and T96. The residue at position 170 (S170) is a Phosphoserine. At K222 the chain carries N6-acetyllysine. Phosphoserine occurs at positions 243 and 244. Y247 is subject to Phosphotyrosine. Residues K248 and K249 each participate in a glycyl lysine isopeptide (Lys-Gly) (interchain with G-Cter in SUMO2) cross-link. S252 is subject to Phosphoserine. An intrachain disulfide couples C366 to C372. A Glycyl lysine isopeptide (Lys-Gly) (interchain with G-Cter in SUMO2) cross-link involves residue K381. G411 is a binding site for ADP. G411 is a binding site for ATP. T430 and T459 each carry phosphothreonine. ADP contacts are provided by G482, E483, E497, and K502. G482 is an ATP binding site. Residue E497 coordinates ATP. Positions 526–545 (HKKKGDDQSRQGGAPDAGQE) are disordered.

This sequence belongs to the TCP-1 chaperonin family. As to quaternary structure, component of the chaperonin-containing T-complex (TRiC), a hexadecamer composed of two identical back-to-back stacked rings enclosing a protein folding chamber. Each ring is made up of eight different subunits: TCP1/CCT1, CCT2, CCT3, CCT4, CCT5, CCT6A/CCT6, CCT7, CCT8. Interacts with PACRG. Interacts with DNAAF4. Interacts with DLEC1.

The protein localises to the cytoplasm. The enzyme catalyses ATP + H2O = ADP + phosphate + H(+). Functionally, component of the chaperonin-containing T-complex (TRiC), a molecular chaperone complex that assists the folding of actin, tubulin and other proteins upon ATP hydrolysis. The TRiC complex mediates the folding of WRAP53/TCAB1, thereby regulating telomere maintenance. As part of the TRiC complex may play a role in the assembly of BBSome, a complex involved in ciliogenesis regulating transports vesicles to the cilia. In Macaca fascicularis (Crab-eating macaque), this protein is T-complex protein 1 subunit gamma (CCT3).